We begin with the raw amino-acid sequence, 362 residues long: Stress response regulator protein 1 (362 aa).

Disordered stretches follow at residues 1 to 39 (MTRL…SLVQ) and 163 to 188 (TLKS…ETKT). The segment covering 19 to 39 (PSQLLHSASLSSSPSSPSLVQ) has biased composition (low complexity). In terms of domain architecture, Response regulatory spans 209–327 (KFLLVDDNLI…LDFMANVIDE (119 aa)). Position 260 is a 4-aspartylphosphate (Asp-260).

Required for stress adaptation, morphogenesis and virulence. This is Stress response regulator protein 1 (SRR1) from Lodderomyces elongisporus (strain ATCC 11503 / CBS 2605 / JCM 1781 / NBRC 1676 / NRRL YB-4239) (Yeast).